Here is a 1402-residue protein sequence, read N- to C-terminus: Baculoviral IAP repeat-containing protein 1g (1402 aa).

BIR repeat units lie at residues 60-127 (EAKR…CEFL), 159-227 (EEAR…CEFL), and 278-345 (EELR…CVFL). Cys315, Cys318, His335, and Cys342 together coordinate Zn(2+). The NACHT domain maps to 464 to 759 (SVMCVEGEAG…EFLAAVRLTE (296 aa)). Lys476 lines the ATP pocket.

Prevents motor-neuron apoptosis induced by a variety of signals. In Mus musculus (Mouse), this protein is Baculoviral IAP repeat-containing protein 1g (Naip7).